A 320-amino-acid polypeptide reads, in one-letter code: Methylenetetrahydrofolate dehydrogenase [NAD(+)] (320 aa).

The active site involves Cys-150. NAD(+) contacts are provided by residues 185-186 (RS), 208-209 (DV), and 274-276 (FAC).

It belongs to the tetrahydrofolate dehydrogenase/cyclohydrolase family. As to quaternary structure, homodimer. Post-translationally, the N-terminus is blocked.

It localises to the cytoplasm. It is found in the nucleus. It catalyses the reaction (6R)-5,10-methylene-5,6,7,8-tetrahydrofolate + NAD(+) = (6R)-5,10-methenyltetrahydrofolate + NADH. Its function is as follows. Catalyzes oxidation of cytoplasmic one-carbon units for purine biosynthesis. The polypeptide is Methylenetetrahydrofolate dehydrogenase [NAD(+)] (MTD1) (Saccharomyces cerevisiae (strain ATCC 204508 / S288c) (Baker's yeast)).